Reading from the N-terminus, the 845-residue chain is Putative DEAD-box ATP-dependent RNA helicase 29 (845 aa).

A Q motif motif is present at residues 28 to 56; that stretch reads GGFESLNLGPNVFNAIKKKGYKVPTPIQR. The region spanning 59–232 is the Helicase ATP-binding domain; it reads MPLILSGVDV…KAGLREPQLV (174 aa). Residue 72 to 79 coordinates ATP; that stretch reads ARTGSGKT. The DEAD box signature appears at 180-183; sequence DEAD. Residues 256 to 411 enclose the Helicase C-terminal domain; that stretch reads KYSALLYLVR…EVLKNMEEVM (156 aa). The disordered stretch occupies residues 675–845; that stretch reads SGKIKTESGA…GGGGKRGRGR (171 aa). Composition is skewed to basic and acidic residues over residues 696-716 and 738-754; these read RWQERSHKKVSRDSGDADETT and VRSEIKDLDQVRKERQQ. Residues 770 to 799 are compositionally biased toward gly residues; sequence GGRGGARGGRGGGARGGRGGSRDFGGGGRD. Over residues 806-817 the composition is skewed to basic and acidic residues; sequence RGGRSGGRDFGG. The segment covering 828 to 845 has biased composition (basic residues); the sequence is GGKRGGGRGGGGKRGRGR.

This sequence belongs to the DEAD box helicase family. DDX54/DBP10 subfamily.

The catalysed reaction is ATP + H2O = ADP + phosphate + H(+). In Arabidopsis thaliana (Mouse-ear cress), this protein is Putative DEAD-box ATP-dependent RNA helicase 29 (RH29).